The chain runs to 314 residues: Methionyl-tRNA formyltransferase (314 aa).

Ser109–Pro112 contacts (6S)-5,6,7,8-tetrahydrofolate.

It belongs to the Fmt family.

It catalyses the reaction L-methionyl-tRNA(fMet) + (6R)-10-formyltetrahydrofolate = N-formyl-L-methionyl-tRNA(fMet) + (6S)-5,6,7,8-tetrahydrofolate + H(+). Attaches a formyl group to the free amino group of methionyl-tRNA(fMet). The formyl group appears to play a dual role in the initiator identity of N-formylmethionyl-tRNA by promoting its recognition by IF2 and preventing the misappropriation of this tRNA by the elongation apparatus. The sequence is that of Methionyl-tRNA formyltransferase from Alkaliphilus metalliredigens (strain QYMF).